Reading from the N-terminus, the 243-residue chain is MTLYFAYPNAESGDCKCLGLIFFVKDYYGEKVFPPIGCVGITQFENQASKTNYFSNVDKARSLQKRFMEEAGVDVVGRVKALLQSIVPPGLPVRLAQEDGKSYFAGLLRLINSSALIHADYGPFDGPGWEIGAIKAQLTWNILLKEVRGGESVVYNRFWKGKEDDDKYRDVTKSYGYSRDVIDGCESKKIAPIVGQIALFNPRNFHEVLAIENPEKVSRYTFSSFIGYLPPTAPEGPAIILWS.

Part of the gene cluster that mediates the biosynthesis of the lipopeptide antibiotics leucinostatins that show extensive biological activities, including antimalarial, antiviral, antibacterial, antifungal, and antitumor activities, as well as phytotoxic. The function of lcsS within the leucinostatins biosynthesis has not been identified yet. The sequence is that of Leucinostatins biosynthesis cluster protein S from Purpureocillium lilacinum (Paecilomyces lilacinus).